The primary structure comprises 302 residues: RNA polymerase II holoenzyme cyclin-like subunit (302 aa).

Residues 53 to 142 enclose the Cyclin N-terminal domain; sequence QQLIKLGKRM…LGECEFSLIS (90 aa).

This sequence belongs to the cyclin family. Cyclin C subfamily. As to quaternary structure, component of the srb8-11 complex, a regulatory module of the Mediator complex.

Its subcellular location is the nucleus. Its function is as follows. Component of the srb8-11 complex. The srb8-11 complex is a regulatory module of the Mediator complex which is itself involved in regulation of basal and activated RNA polymerase II-dependent transcription. The srb8-11 complex may be involved in the transcriptional repression of a subset of genes regulated by Mediator. It may inhibit the association of the Mediator complex with RNA polymerase II to form the holoenzyme complex. The srb8-11 complex phosphorylates the C-terminal domain (CTD) of the largest subunit of RNA polymerase II. This Aspergillus clavatus (strain ATCC 1007 / CBS 513.65 / DSM 816 / NCTC 3887 / NRRL 1 / QM 1276 / 107) protein is RNA polymerase II holoenzyme cyclin-like subunit (ssn8).